Consider the following 273-residue polypeptide: Phosphate import ATP-binding protein PstB (273 aa).

Positions 27-268 constitute an ABC transporter domain; that stretch reads VTVRNLNFYY…PSDRRTQDYI (242 aa). 59 to 66 serves as a coordination point for ATP; that stretch reads GPSGCGKS.

Belongs to the ABC transporter superfamily. Phosphate importer (TC 3.A.1.7) family. The complex is composed of two ATP-binding proteins (PstB), two transmembrane proteins (PstC and PstA) and a solute-binding protein (PstS).

Its subcellular location is the cell inner membrane. It catalyses the reaction phosphate(out) + ATP + H2O = ADP + 2 phosphate(in) + H(+). Its function is as follows. Part of the ABC transporter complex PstSACB involved in phosphate import. Responsible for energy coupling to the transport system. This chain is Phosphate import ATP-binding protein PstB, found in Bradyrhizobium diazoefficiens (strain JCM 10833 / BCRC 13528 / IAM 13628 / NBRC 14792 / USDA 110).